Here is a 211-residue protein sequence, read N- to C-terminus: Large ribosomal subunit protein uL3 (211 aa).

Q150 carries the post-translational modification N5-methylglutamine.

This sequence belongs to the universal ribosomal protein uL3 family. Part of the 50S ribosomal subunit. Forms a cluster with proteins L14 and L19. Post-translationally, methylated by PrmB.

Functionally, one of the primary rRNA binding proteins, it binds directly near the 3'-end of the 23S rRNA, where it nucleates assembly of the 50S subunit. The protein is Large ribosomal subunit protein uL3 of Pseudomonas putida (strain GB-1).